The primary structure comprises 242 residues: tRNA (guanine-N(1)-)-methyltransferase (242 aa).

Residues G115 and 134–139 (LGDFVL) contribute to the S-adenosyl-L-methionine site. Over residues 210 to 224 (QEQREQRTAARRPDL) the composition is skewed to basic and acidic residues. Residues 210–242 (QEQREQRTAARRPDLMQRWQQRFGADNDSEHRA) form a disordered region.

Belongs to the RNA methyltransferase TrmD family. Homodimer.

The protein localises to the cytoplasm. It catalyses the reaction guanosine(37) in tRNA + S-adenosyl-L-methionine = N(1)-methylguanosine(37) in tRNA + S-adenosyl-L-homocysteine + H(+). In terms of biological role, specifically methylates guanosine-37 in various tRNAs. The polypeptide is tRNA (guanine-N(1)-)-methyltransferase (Synechococcus sp. (strain WH7803)).